Consider the following 167-residue polypeptide: Ubiquitin-fold modifier-conjugating enzyme 1 (167 aa).

C116 acts as the Glycyl thioester intermediate in catalysis. Residue K122 forms a Glycyl lysine isopeptide (Lys-Gly) (interchain with G-Cter in UFM1) linkage.

This sequence belongs to the ubiquitin-conjugating enzyme family. UFC1 subfamily. Interacts with UBA5 (via C-terminus). Interacts with UFL1. Interacts with UFM1. Interacts with KIRREL3. Post-translationally, ufmylated at Lys-122. Deufmylated by UFSP1.

Functionally, E2-like enzyme which specifically catalyzes the second step in ufmylation. Accepts the ubiquitin-like modifier UFM1 from the E1 enzyme UBA5 and forms an intermediate with UFM1 via a thioester linkage. Ufmylation is involved in various processes, such as ribosome recycling, response to DNA damage, interferon response or reticulophagy (also called ER-phagy). The chain is Ubiquitin-fold modifier-conjugating enzyme 1 from Homo sapiens (Human).